The sequence spans 336 residues: Glycerol-3-phosphate dehydrogenase [NAD(P)+] (336 aa).

4 residues coordinate NADPH: Ser-16, Tyr-17, His-37, and Lys-111. Sn-glycerol 3-phosphate-binding residues include Lys-111, Gly-140, and Thr-142. Ala-144 contacts NADPH. Lys-196, Asp-249, Ser-259, Arg-260, and Asn-261 together coordinate sn-glycerol 3-phosphate. Residue Lys-196 is the Proton acceptor of the active site. Arg-260 lines the NADPH pocket. NADPH-binding residues include Val-284 and Glu-286.

It belongs to the NAD-dependent glycerol-3-phosphate dehydrogenase family.

Its subcellular location is the cytoplasm. It catalyses the reaction sn-glycerol 3-phosphate + NAD(+) = dihydroxyacetone phosphate + NADH + H(+). The catalysed reaction is sn-glycerol 3-phosphate + NADP(+) = dihydroxyacetone phosphate + NADPH + H(+). The protein operates within membrane lipid metabolism; glycerophospholipid metabolism. In terms of biological role, catalyzes the reduction of the glycolytic intermediate dihydroxyacetone phosphate (DHAP) to sn-glycerol 3-phosphate (G3P), the key precursor for phospholipid synthesis. The chain is Glycerol-3-phosphate dehydrogenase [NAD(P)+] from Haemophilus ducreyi (strain 35000HP / ATCC 700724).